Here is a 161-residue protein sequence, read N- to C-terminus: Phosphopantetheine adenylyltransferase (161 aa).

Thr10 is a binding site for substrate. Residues 10–11 (TF) and His18 each bind ATP. Residues Lys42, Leu75, and Arg89 each coordinate substrate. ATP is bound by residues 90–92 (GLR), Glu100, and 125–131 (YSFLSSS).

This sequence belongs to the bacterial CoaD family. As to quaternary structure, homohexamer. Mg(2+) serves as cofactor.

It is found in the cytoplasm. The enzyme catalyses (R)-4'-phosphopantetheine + ATP + H(+) = 3'-dephospho-CoA + diphosphate. The protein operates within cofactor biosynthesis; coenzyme A biosynthesis; CoA from (R)-pantothenate: step 4/5. In terms of biological role, reversibly transfers an adenylyl group from ATP to 4'-phosphopantetheine, yielding dephospho-CoA (dPCoA) and pyrophosphate. This is Phosphopantetheine adenylyltransferase from Thermodesulfovibrio yellowstonii (strain ATCC 51303 / DSM 11347 / YP87).